Consider the following 275-residue polypeptide: Large ribosomal subunit protein uL2c (275 aa).

The disordered stretch occupies residues 225–275; sequence MNPCDHPHGGGEGRSPIGRPRPVSPWGKPALGQRTRKGHKYSDQMILRRRK.

Belongs to the universal ribosomal protein uL2 family. Part of the 50S ribosomal subunit.

It localises to the plastid. Its subcellular location is the chloroplast. In Oltmannsiellopsis viridis (Marine flagellate), this protein is Large ribosomal subunit protein uL2c (rpl2).